The following is a 230-amino-acid chain: RNA chaperone ProQ (230 aa).

A disordered region spans residues 106-181 (AKARVQAQRA…EERHTPVSDI (76 aa)). Residues 146–155 (RRKDNAERKP) show a composition bias toward basic and acidic residues. Residues 158 to 167 (AKPAAAAKPS) are compositionally biased toward low complexity.

The protein belongs to the ProQ family.

It is found in the cytoplasm. In terms of biological role, RNA chaperone with significant RNA binding, RNA strand exchange and RNA duplexing activities. May regulate ProP activity through an RNA-based, post-transcriptional mechanism. This Cronobacter sakazakii (strain ATCC BAA-894) (Enterobacter sakazakii) protein is RNA chaperone ProQ.